A 128-amino-acid polypeptide reads, in one-letter code: Large ribosomal subunit protein mL51 (128 aa).

Residues 1–31 (MAGSLSWVAGRRLWGLVPLACRSFFLGVPRL) constitute a mitochondrion transit peptide.

Belongs to the mitochondrion-specific ribosomal protein mL51 family. Component of the mitochondrial ribosome large subunit (39S) which comprises a 16S rRNA and about 50 distinct proteins. Interacts with OXA1L.

The protein localises to the mitochondrion. This Bos taurus (Bovine) protein is Large ribosomal subunit protein mL51 (MRPL51).